The primary structure comprises 489 residues: 3-octaprenyl-4-hydroxybenzoate carboxy-lyase (489 aa).

N172 contacts Mn(2+). Prenylated FMN contacts are provided by residues I175 to R177, R189 to L191, and R194 to G195. A Mn(2+)-binding site is contributed by E238. D287 (proton donor) is an active-site residue.

The protein belongs to the UbiD family. In terms of assembly, homohexamer. Requires prenylated FMN as cofactor. It depends on Mn(2+) as a cofactor.

It is found in the cell membrane. The catalysed reaction is a 4-hydroxy-3-(all-trans-polyprenyl)benzoate + H(+) = a 2-(all-trans-polyprenyl)phenol + CO2. It functions in the pathway cofactor biosynthesis; ubiquinone biosynthesis. Catalyzes the decarboxylation of 3-octaprenyl-4-hydroxy benzoate to 2-octaprenylphenol, an intermediate step in ubiquinone biosynthesis. The chain is 3-octaprenyl-4-hydroxybenzoate carboxy-lyase from Aeromonas hydrophila subsp. hydrophila (strain ATCC 7966 / DSM 30187 / BCRC 13018 / CCUG 14551 / JCM 1027 / KCTC 2358 / NCIMB 9240 / NCTC 8049).